We begin with the raw amino-acid sequence, 308 residues long: Aspartate carbamoyltransferase catalytic subunit (308 aa).

Positions 59 and 60 each coordinate carbamoyl phosphate. Lysine 87 lines the L-aspartate pocket. Positions 109, 137, and 140 each coordinate carbamoyl phosphate. The L-aspartate site is built by arginine 170 and arginine 224. Positions 265 and 266 each coordinate carbamoyl phosphate.

This sequence belongs to the aspartate/ornithine carbamoyltransferase superfamily. ATCase family. In terms of assembly, heterododecamer (2C3:3R2) of six catalytic PyrB chains organized as two trimers (C3), and six regulatory PyrI chains organized as three dimers (R2).

The catalysed reaction is carbamoyl phosphate + L-aspartate = N-carbamoyl-L-aspartate + phosphate + H(+). It participates in pyrimidine metabolism; UMP biosynthesis via de novo pathway; (S)-dihydroorotate from bicarbonate: step 2/3. In terms of biological role, catalyzes the condensation of carbamoyl phosphate and aspartate to form carbamoyl aspartate and inorganic phosphate, the committed step in the de novo pyrimidine nucleotide biosynthesis pathway. The protein is Aspartate carbamoyltransferase catalytic subunit of Flavobacterium johnsoniae (strain ATCC 17061 / DSM 2064 / JCM 8514 / BCRC 14874 / CCUG 350202 / NBRC 14942 / NCIMB 11054 / UW101) (Cytophaga johnsonae).